The chain runs to 285 residues: Polyamine aminopropyltransferase (285 aa).

The PABS domain occupies 5–241; that stretch reads DTWFTEHFQA…GWWSVTLSSK (237 aa). An S-methyl-5'-thioadenosine-binding site is contributed by Gln35. Spermidine is bound by residues His66 and Asp90. S-methyl-5'-thioadenosine-binding positions include Asp110 and 141 to 142; that span reads DG. Catalysis depends on Asp160, which acts as the Proton acceptor. Residue 160–163 coordinates spermidine; the sequence is DSTD. S-methyl-5'-thioadenosine is bound at residue Pro167.

It belongs to the spermidine/spermine synthase family. In terms of assembly, homodimer or homotetramer.

It is found in the cytoplasm. It carries out the reaction S-adenosyl 3-(methylsulfanyl)propylamine + putrescine = S-methyl-5'-thioadenosine + spermidine + H(+). It participates in amine and polyamine biosynthesis; spermidine biosynthesis; spermidine from putrescine: step 1/1. Catalyzes the irreversible transfer of a propylamine group from the amino donor S-adenosylmethioninamine (decarboxy-AdoMet) to putrescine (1,4-diaminobutane) to yield spermidine. The polypeptide is Polyamine aminopropyltransferase (Xylella fastidiosa (strain M12)).